A 301-amino-acid polypeptide reads, in one-letter code: 4-hydroxy-tetrahydrodipicolinate synthase (301 aa).

Threonine 46 is a binding site for pyruvate. Residue tyrosine 135 is the Proton donor/acceptor of the active site. Lysine 163 serves as the catalytic Schiff-base intermediate with substrate. Isoleucine 205 provides a ligand contact to pyruvate.

It belongs to the DapA family. In terms of assembly, homotetramer; dimer of dimers.

The protein localises to the cytoplasm. It catalyses the reaction L-aspartate 4-semialdehyde + pyruvate = (2S,4S)-4-hydroxy-2,3,4,5-tetrahydrodipicolinate + H2O + H(+). It functions in the pathway amino-acid biosynthesis; L-lysine biosynthesis via DAP pathway; (S)-tetrahydrodipicolinate from L-aspartate: step 3/4. Catalyzes the condensation of (S)-aspartate-beta-semialdehyde [(S)-ASA] and pyruvate to 4-hydroxy-tetrahydrodipicolinate (HTPA). The polypeptide is 4-hydroxy-tetrahydrodipicolinate synthase (Lacticaseibacillus casei (strain BL23) (Lactobacillus casei)).